The primary structure comprises 258 residues: L-aspartate dehydrogenase 1 (258 aa).

2 residues coordinate NAD(+): Ala121 and Asn181. Residue His211 is part of the active site.

This sequence belongs to the L-aspartate dehydrogenase family.

It catalyses the reaction L-aspartate + NADP(+) + H2O = oxaloacetate + NH4(+) + NADPH + H(+). It carries out the reaction L-aspartate + NAD(+) + H2O = oxaloacetate + NH4(+) + NADH + H(+). It participates in cofactor biosynthesis; NAD(+) biosynthesis; iminoaspartate from L-aspartate (dehydrogenase route): step 1/1. Functionally, specifically catalyzes the NAD or NADP-dependent dehydrogenation of L-aspartate to iminoaspartate. The chain is L-aspartate dehydrogenase 1 from Bordetella parapertussis (strain 12822 / ATCC BAA-587 / NCTC 13253).